The primary structure comprises 364 residues: 4-hydroxy-3-methylbut-2-en-1-yl diphosphate synthase (flavodoxin) (364 aa).

[4Fe-4S] cluster is bound by residues C268, C271, C303, and E310.

This sequence belongs to the IspG family. [4Fe-4S] cluster serves as cofactor.

The enzyme catalyses (2E)-4-hydroxy-3-methylbut-2-enyl diphosphate + oxidized [flavodoxin] + H2O + 2 H(+) = 2-C-methyl-D-erythritol 2,4-cyclic diphosphate + reduced [flavodoxin]. It functions in the pathway isoprenoid biosynthesis; isopentenyl diphosphate biosynthesis via DXP pathway; isopentenyl diphosphate from 1-deoxy-D-xylulose 5-phosphate: step 5/6. Functionally, converts 2C-methyl-D-erythritol 2,4-cyclodiphosphate (ME-2,4cPP) into 1-hydroxy-2-methyl-2-(E)-butenyl 4-diphosphate. The chain is 4-hydroxy-3-methylbut-2-en-1-yl diphosphate synthase (flavodoxin) from Anoxybacillus flavithermus (strain DSM 21510 / WK1).